Here is a 78-residue protein sequence, read N- to C-terminus: Large ribosomal subunit protein bL28 (78 aa).

This sequence belongs to the bacterial ribosomal protein bL28 family.

The protein is Large ribosomal subunit protein bL28 of Marinobacter nauticus (strain ATCC 700491 / DSM 11845 / VT8) (Marinobacter aquaeolei).